The sequence spans 142 residues: Malate dehydrogenase, mitochondrial (142 aa).

Residues 1-6 and Asp-26 each bind NAD(+); that span reads ASGGIG. Substrate-binding residues include Arg-73 and Arg-79. Residues Asn-86 and 109–111 contribute to the NAD(+) site; that span reads ITN. Residue Asn-111 participates in substrate binding.

It belongs to the LDH/MDH superfamily. MDH type 1 family. In terms of assembly, homodimer.

It localises to the mitochondrion matrix. The enzyme catalyses (S)-malate + NAD(+) = oxaloacetate + NADH + H(+). The protein is Malate dehydrogenase, mitochondrial of Schistosoma mansoni (Blood fluke).